The primary structure comprises 932 residues: Alanine--tRNA ligase, mitochondrial (932 aa).

Positions Ser-458–Pro-480 are disordered. The segment covering Thr-464 to Gln-478 has biased composition (low complexity). Positions 610, 614, 713, and 717 each coordinate Zn(2+).

The protein belongs to the class-II aminoacyl-tRNA synthetase family. In terms of assembly, monomer. Zn(2+) is required as a cofactor.

The protein localises to the mitochondrion. It catalyses the reaction tRNA(Ala) + L-alanine + ATP = L-alanyl-tRNA(Ala) + AMP + diphosphate. Its function is as follows. Catalyzes the attachment of alanine to tRNA(Ala) in a two-step reaction: alanine is first activated by ATP to form Ala-AMP and then transferred to the acceptor end of tRNA(Ala). Also edits incorrectly charged tRNA(Ala) via its editing domain. This is Alanine--tRNA ligase, mitochondrial (malaS) from Dictyostelium discoideum (Social amoeba).